Here is a 281-residue protein sequence, read N- to C-terminus: Ribosomal RNA small subunit methyltransferase A (281 aa).

S-adenosyl-L-methionine contacts are provided by asparagine 36, leucine 38, glycine 63, glutamate 84, aspartate 109, and asparagine 127.

The protein belongs to the class I-like SAM-binding methyltransferase superfamily. rRNA adenine N(6)-methyltransferase family. RsmA subfamily.

Its subcellular location is the cytoplasm. It carries out the reaction adenosine(1518)/adenosine(1519) in 16S rRNA + 4 S-adenosyl-L-methionine = N(6)-dimethyladenosine(1518)/N(6)-dimethyladenosine(1519) in 16S rRNA + 4 S-adenosyl-L-homocysteine + 4 H(+). Functionally, specifically dimethylates two adjacent adenosines (A1518 and A1519) in the loop of a conserved hairpin near the 3'-end of 16S rRNA in the 30S particle. May play a critical role in biogenesis of 30S subunits. This is Ribosomal RNA small subunit methyltransferase A from Borreliella burgdorferi (strain ATCC 35210 / DSM 4680 / CIP 102532 / B31) (Borrelia burgdorferi).